We begin with the raw amino-acid sequence, 451 residues long: Molybdate-anion transporter (451 aa).

Helical transmembrane passes span 1-21, 45-65, 79-99, 130-150, 180-200, 201-221, 251-271, 281-301, 316-336, 346-366, 378-398, and 410-430; these read MLVT…VLEF, YDFY…GPYL, IAII…VSVP, FVLM…FSCF, NGGI…WLGL, GPAS…VLVI, VLLL…FIFL, APLG…SSLY, VLCL…FSTA, LLAF…MRFL, GVLN…LLVL, and MFSL…SLFT.

This sequence belongs to the major facilitator superfamily.

The protein resides in the cell membrane. In terms of biological role, mediates high-affinity intracellular uptake of the rare oligo-element molybdenum. This is Molybdate-anion transporter (mfsd5) from Xenopus laevis (African clawed frog).